The following is an 815-amino-acid chain: SNF1 protein kinase subunit beta-1 (815 aa).

Residues 1–11 (MGNSPSTQDPS) are compositionally biased toward polar residues. 2 disordered regions span residues 1–88 (MGNS…TIDK) and 120–146 (HDVG…TVKR). G2 is lipidated: N-myristoyl glycine. Residues 12 to 31 (HSTKKEHGHHFHDAFNKDRQ) are compositionally biased toward basic and acidic residues. The segment covering 32–42 (GSITSQLFNNR) has biased composition (polar residues). The residue at position 33 (S33) is a Phosphoserine. Composition is skewed to basic and acidic residues over residues 72–88 (PSTD…TIDK) and 120–129 (HDVGAPEEQV). 6 positions are modified to phosphoserine: S181, S198, S200, S206, S209, and S220. Disordered regions lie at residues 311 to 335 (HANN…NDDF), 363 to 389 (HHNK…FASL), and 410 to 444 (PLHP…SSIS). Low complexity predominate over residues 313 to 326 (NNNGNIENNTRNKG). Residue S331 is modified to Phosphoserine. Positions 363 to 376 (HHNKTKKAQSKKIR) are enriched in basic residues. Low complexity-rich tracts occupy residues 377 to 389 (SASN…FASL) and 433 to 444 (HSNSMSSMSSIS). The tract at residues 473–716 (VSTDIASALK…LQQGGNIDAE (244 aa)) is kinase-interacting sequence (KIS); required for interaction with SNF1. S494 and S497 each carry phosphoserine. The segment at 581–616 (EPTLDEELPKRPELKRFPSSSRKSSYYSAKGVERPS) is disordered. Over residues 587-596 (ELPKRPELKR) the composition is skewed to basic and acidic residues. Low complexity predominate over residues 599–608 (SSSRKSSYYS). S643 carries the phosphoserine modification. Residues 724-804 (SRYPVPDLPI…FITQVVYAPC (81 aa)) form an association with SNF1 kinase complex (ASC) domain; required for interaction with SNF4 region.

The protein belongs to the 5'-AMP-activated protein kinase beta subunit family. Component of the SNF1 kinase complex, a heterotrimeric complex composed of the catalytic alpha subunit SNF1, one of the three related beta subunits SIP1, SIP2 or GAL83, and the regulatory gamma subunit SNF4. The beta subunit serves as a bridge between the catalytic and the regulatory subunit. Interacts (via KIS domain) with SNF1. Interacts (via ASC domain) with SNF4. In terms of processing, phosphorylated by SNF1 in vitro.

Its subcellular location is the cytoplasm. It localises to the vacuole membrane. Functionally, beta subunit of the SNF1 kinase complex, which is required for transcriptional, metabolic, and developmental adaptations in response to glucose limitation. Has a structural role, mediating heterotrimer formation, and a regulatory role, defining carbon source-regulated subcellular location and substrate specificity of the SNF1 kinase complex. Promotes the PKA-regulated relocalization of the SNF1 kinase complex to the vacuolar membrane in response to various types of carbon stress. This Saccharomyces cerevisiae (strain RM11-1a) (Baker's yeast) protein is SNF1 protein kinase subunit beta-1 (SIP1).